The following is a 139-amino-acid chain: Small ribosomal subunit protein uS12m (139 aa).

Positions 1-21 (MLSTLYQNDLKKKRNRRRNRS) are disordered. The segment covering 11–20 (KKKRNRRRNR) has biased composition (basic residues).

The protein belongs to the universal ribosomal protein uS12 family.

It is found in the mitochondrion. Functionally, protein S12 is involved in the translation initiation step. The chain is Small ribosomal subunit protein uS12m (RPS12) from Paramecium tetraurelia.